The sequence spans 146 residues: Hemoglobin subunit beta (146 aa).

N-acetylvaline is present on Val-1. The Globin domain maps to 2-146 (HLTPEEKSAV…VANALAHKYH (145 aa)). A Phosphothreonine modification is found at Thr-12. Position 44 is a phosphoserine (Ser-44). Position 59 is an N6-acetyllysine (Lys-59). Residue His-63 coordinates heme b. Lys-82 carries the post-translational modification N6-acetyllysine. Residue His-92 coordinates heme b. Cys-93 is modified (S-nitrosocysteine). Lys-144 is modified (N6-acetyllysine).

The protein belongs to the globin family. Heterotetramer of two alpha chains and two beta chains. In terms of tissue distribution, red blood cells.

Involved in oxygen transport from the lung to the various peripheral tissues. This chain is Hemoglobin subunit beta (HBB), found in Hylobates lar (Lar gibbon).